The primary structure comprises 237 residues: Phosphoribosylaminoimidazole-succinocarboxamide synthase (237 aa).

This sequence belongs to the SAICAR synthetase family.

It catalyses the reaction 5-amino-1-(5-phospho-D-ribosyl)imidazole-4-carboxylate + L-aspartate + ATP = (2S)-2-[5-amino-1-(5-phospho-beta-D-ribosyl)imidazole-4-carboxamido]succinate + ADP + phosphate + 2 H(+). It participates in purine metabolism; IMP biosynthesis via de novo pathway; 5-amino-1-(5-phospho-D-ribosyl)imidazole-4-carboxamide from 5-amino-1-(5-phospho-D-ribosyl)imidazole-4-carboxylate: step 1/2. This chain is Phosphoribosylaminoimidazole-succinocarboxamide synthase, found in Methanosarcina mazei (strain ATCC BAA-159 / DSM 3647 / Goe1 / Go1 / JCM 11833 / OCM 88) (Methanosarcina frisia).